A 270-amino-acid polypeptide reads, in one-letter code: Putative F-box protein At3g24700 (270 aa).

Positions 1 to 45 (MLTDLPLDLESEILSRVPATSLQRLKTTCKRWYALFRDPRFVKKN) constitute an F-box domain.

The sequence is that of Putative F-box protein At3g24700 from Arabidopsis thaliana (Mouse-ear cress).